The sequence spans 312 residues: Methionyl-tRNA formyltransferase (312 aa).

(6S)-5,6,7,8-tetrahydrofolate is bound at residue 109 to 112 (SLLP).

The protein belongs to the Fmt family.

The catalysed reaction is L-methionyl-tRNA(fMet) + (6R)-10-formyltetrahydrofolate = N-formyl-L-methionyl-tRNA(fMet) + (6S)-5,6,7,8-tetrahydrofolate + H(+). Its function is as follows. Attaches a formyl group to the free amino group of methionyl-tRNA(fMet). The formyl group appears to play a dual role in the initiator identity of N-formylmethionyl-tRNA by promoting its recognition by IF2 and preventing the misappropriation of this tRNA by the elongation apparatus. In Listeria innocua serovar 6a (strain ATCC BAA-680 / CLIP 11262), this protein is Methionyl-tRNA formyltransferase.